The chain runs to 447 residues: Phosphoglucosamine mutase (447 aa).

Ser-108 (phosphoserine intermediate) is an active-site residue. The Mg(2+) site is built by Ser-108, Asp-247, Asp-249, and Asp-251. Ser-108 carries the post-translational modification Phosphoserine.

It belongs to the phosphohexose mutase family. Mg(2+) serves as cofactor. Post-translationally, activated by phosphorylation.

The catalysed reaction is alpha-D-glucosamine 1-phosphate = D-glucosamine 6-phosphate. Its function is as follows. Catalyzes the conversion of glucosamine-6-phosphate to glucosamine-1-phosphate. This Bordetella avium (strain 197N) protein is Phosphoglucosamine mutase.